The sequence spans 162 residues: Peroxiredoxin-2C (162 aa).

One can recognise a Thioredoxin domain in the interval 4-162; sequence VAVGDTLPDG…SGAEEILKAL (159 aa). The active-site Cysteine sulfenic acid (-SOH) intermediate is C51.

The protein belongs to the peroxiredoxin family. Prx5 subfamily. In terms of assembly, monomer.

It is found in the cytoplasm. The enzyme catalyses [glutaredoxin]-dithiol + a hydroperoxide = [glutaredoxin]-disulfide + an alcohol + H2O. Its function is as follows. Reduces hydrogen peroxide and alkyl hydroperoxides with reducing equivalents provided through the thioredoxin or glutaredoxin system. May be involved in intracellular redox signaling. Thiol-specific peroxidase that catalyzes the reduction of hydrogen peroxide and organic hydroperoxides to water and alcohols, respectively. Plays a role in cell protection against oxidative stress by detoxifying peroxides. The protein is Peroxiredoxin-2C (PRXIIC) of Oryza sativa subsp. japonica (Rice).